Here is a 280-residue protein sequence, read N- to C-terminus: Chaperone for lacto-N-biosidase (280 aa).

A signal peptide spans 1–37 (MPRRHRFAAAIAAVAVAAVLLVTLTVAVVTHGDGAFA).

Homodimer.

Its subcellular location is the secreted. In terms of biological role, chaperone required for active expression of the lacto-N-biosidase LnbX. The polypeptide is Chaperone for lacto-N-biosidase (Bifidobacterium longum subsp. longum (strain ATCC 15707 / DSM 20219 / JCM 1217 / NCTC 11818 / E194b)).